Reading from the N-terminus, the 194-residue chain is uncharacterized protein (194 aa).

Residues 17-37 (DVWLYLLVFGCLSVLVLVLVH) traverse the membrane as a helical segment.

The protein belongs to the IIV-6 307L family.

It localises to the membrane. This is an uncharacterized protein from Invertebrate iridescent virus 3 (IIV-3).